Reading from the N-terminus, the 651-residue chain is MSESTPEVSSSYPPPAHFAEHANARAELYREAEEDRLAFWAKQANRLSWTTPFTEVLDWSEAPFAKWFVGGELNVAYNCVDRHVEAGHGDRVAIHWEGEPVGDRRTLTYSDLLAEVSKAANALTDLGLVAGDRVAIYLPLIPEAVIAMLACARLGIMHSVVFGGFTAAALQARIVDAQAKLLITADGQFRRGKPSPLKAAADEALAAIPDCSVEHVLVVRRTGIEMAWSEGRDLWWHHVVGSASPAHTPEPFDSEHPLFLLYTSGTTGKPKGIMHTSGGYLTQCCYTMRTIFDVKPDSDVFWCTADIGWVTGHTYGVYGPLCNGVTEVLYEGTPDTPDRHRHFQIIEKYGVTIYYTAPTLIRMFMKWGREIPDSHDLSSLRLLGSVGEPINPEAWRWYRDVIGGGRTPLVDTWWQTETGSAMISPLPGIAAAKPGSAMTPLPGISAKIVDDHGDPLPPHTEGAQHVTGYLVLDQPWPSMLRGIWGDPARYWHSYWSKFSDKGYYFAGDGARIDPDGAIWVLGRIDDVMNVSGHRISTAEVESALVAHSGVAEAAVVGVTDETTTQAICAFVVLRANYAPHDRTAEELRTEVARVISPIARPRDVHVVPELPKTRSGKIMRRLLRDVAENRELGDTSTLLDPTVFDAIRAAK.

Residues 190-193 and Thr-311 each bind CoA; that span reads RRGK. ATP is bound by residues 387–389, 411–416, Asp-508, and Arg-523; these read GEP and DTWWQT. Residue Ser-531 coordinates CoA. Arg-534 is an ATP binding site. Mg(2+)-binding residues include Val-545, His-547, and Val-550. An N6-acetyllysine modification is found at Lys-617.

The protein belongs to the ATP-dependent AMP-binding enzyme family. Mg(2+) serves as cofactor. Acetylated. Deacetylation by the SIR2-homolog deacetylase activates the enzyme.

The enzyme catalyses acetate + ATP + CoA = acetyl-CoA + AMP + diphosphate. Functionally, catalyzes the conversion of acetate into acetyl-CoA (AcCoA), an essential intermediate at the junction of anabolic and catabolic pathways. AcsA undergoes a two-step reaction. In the first half reaction, AcsA combines acetate with ATP to form acetyl-adenylate (AcAMP) intermediate. In the second half reaction, it can then transfer the acetyl group from AcAMP to the sulfhydryl group of CoA, forming the product AcCoA. This chain is Acetyl-coenzyme A synthetase, found in Mycobacterium bovis (strain ATCC BAA-935 / AF2122/97).